Here is a 197-residue protein sequence, read N- to C-terminus: Translation machinery-associated protein 22 (197 aa).

Residues 102–173 (VQIKRVERNK…DVKEWLLEVY (72 aa)) form the SUI1 domain.

Belongs to the DENR family. Interacts with the 40S ribosomal subunit.

The protein localises to the cytoplasm. The polypeptide is Translation machinery-associated protein 22 (tma22) (Aspergillus niger (strain ATCC MYA-4892 / CBS 513.88 / FGSC A1513)).